Reading from the N-terminus, the 351-residue chain is uncharacterized protein (351 aa).

5 residues coordinate Mn(2+): aspartate 215, aspartate 226, histidine 290, glutamate 319, and glutamate 333.

It belongs to the peptidase M24B family. Requires Mn(2+) as cofactor.

This is an uncharacterized protein from Staphylococcus aureus (strain MRSA252).